The following is a 207-amino-acid chain: Outer-membrane lipoprotein LolB (207 aa).

Positions 1–21 (MPQPDFRLIRLLPLAALVLTA) are cleaved as a signal peptide. Residue Cys-22 is the site of N-palmitoyl cysteine attachment. The S-diacylglycerol cysteine moiety is linked to residue Cys-22.

Belongs to the LolB family. As to quaternary structure, monomer.

Its subcellular location is the cell outer membrane. Its function is as follows. Plays a critical role in the incorporation of lipoproteins in the outer membrane after they are released by the LolA protein. The sequence is that of Outer-membrane lipoprotein LolB from Shigella sonnei (strain Ss046).